We begin with the raw amino-acid sequence, 788 residues long: 5-methyltetrahydropteroyltriglutamate--homocysteine methyltransferase (788 aa).

Residues 24 to 27 (RELK) and lysine 140 contribute to the 5-methyltetrahydropteroyltri-L-glutamate site. L-homocysteine-binding positions include 463-465 (IGS) and glutamate 516. L-methionine-binding positions include 463–465 (IGS) and glutamate 516. Residues 547-548 (RC) and tryptophan 593 each bind 5-methyltetrahydropteroyltri-L-glutamate. Aspartate 631 provides a ligand contact to L-homocysteine. Aspartate 631 lines the L-methionine pocket. Glutamate 637 lines the 5-methyltetrahydropteroyltri-L-glutamate pocket. The Zn(2+) site is built by histidine 673, cysteine 675, and glutamate 697. Histidine 726 (proton donor) is an active-site residue. Cysteine 758 contacts Zn(2+).

This sequence belongs to the vitamin-B12 independent methionine synthase family. The cofactor is Zn(2+).

It carries out the reaction 5-methyltetrahydropteroyltri-L-glutamate + L-homocysteine = tetrahydropteroyltri-L-glutamate + L-methionine. It participates in amino-acid biosynthesis; L-methionine biosynthesis via de novo pathway; L-methionine from L-homocysteine (MetE route): step 1/1. Catalyzes the transfer of a methyl group from 5-methyltetrahydrofolate to homocysteine resulting in methionine formation. The protein is 5-methyltetrahydropteroyltriglutamate--homocysteine methyltransferase of Rhodopseudomonas palustris (strain TIE-1).